Consider the following 309-residue polypeptide: D-alanine--D-alanine ligase (309 aa).

One can recognise an ATP-grasp domain in the interval 105 to 304; it reads KQIWHSVGLP…FNDLVERILA (200 aa). 135–190 is an ATP binding site; sequence LQELGGRVIVKPAREGSSIGMSIADNGRSLALALQHAAEFDDDLLVEQWVEGAEYT. Asp258, Glu271, and Asn273 together coordinate Mg(2+).

It belongs to the D-alanine--D-alanine ligase family. Mg(2+) is required as a cofactor. It depends on Mn(2+) as a cofactor.

The protein localises to the cytoplasm. The enzyme catalyses 2 D-alanine + ATP = D-alanyl-D-alanine + ADP + phosphate + H(+). It functions in the pathway cell wall biogenesis; peptidoglycan biosynthesis. Functionally, cell wall formation. The sequence is that of D-alanine--D-alanine ligase from Idiomarina loihiensis (strain ATCC BAA-735 / DSM 15497 / L2-TR).